We begin with the raw amino-acid sequence, 491 residues long: Phosphatidylglycerol--prolipoprotein diacylglyceryl transferase (491 aa).

A run of 3 helical transmembrane segments spans residues Ile24–Gly44, Val58–Val78, and Ile98–Ile118. Arg146 serves as a coordination point for a 1,2-diacyl-sn-glycero-3-phospho-(1'-sn-glycerol). A run of 2 helical transmembrane segments spans residues Ile192–Val212 and Ile256–Thr276. Positions Asn309–Asp323 are enriched in low complexity. Residues Asn309–Ala491 form a disordered region. The span at Lys347 to Lys360 shows a compositional bias: basic and acidic residues. Composition is skewed to low complexity over residues Asp361–Asp387, Ala394–Lys406, and Ala415–Ser438. Basic and acidic residues predominate over residues Asn453–Glu462. The segment covering Ser463–Thr481 has biased composition (low complexity). The segment covering Asp482 to Ala491 has biased composition (basic and acidic residues).

This sequence belongs to the Lgt family.

It is found in the cell membrane. It catalyses the reaction L-cysteinyl-[prolipoprotein] + a 1,2-diacyl-sn-glycero-3-phospho-(1'-sn-glycerol) = an S-1,2-diacyl-sn-glyceryl-L-cysteinyl-[prolipoprotein] + sn-glycerol 1-phosphate + H(+). Its pathway is protein modification; lipoprotein biosynthesis (diacylglyceryl transfer). Its function is as follows. Catalyzes the transfer of the diacylglyceryl group from phosphatidylglycerol to the sulfhydryl group of the N-terminal cysteine of a prolipoprotein, the first step in the formation of mature lipoproteins. This is Phosphatidylglycerol--prolipoprotein diacylglyceryl transferase from Nocardia farcinica (strain IFM 10152).